The chain runs to 463 residues: Phytase A (463 aa).

The first 19 residues, methionine 1–threonine 19, serve as a signal peptide directing secretion. A glycan (N-linked (GlcNAc...) asparagine) is linked at asparagine 26. Cysteine 29 and cysteine 38 are joined by a disulfide. The N-linked (GlcNAc...) asparagine glycan is linked to asparagine 41. Positions 48, 49, 79, 80, 83, and 86 each coordinate 1D-myo-inositol hexakisphosphate. 4 cysteine pairs are disulfide-bonded: cysteine 69–cysteine 410, cysteine 211–cysteine 460, cysteine 260–cysteine 278, and cysteine 431–cysteine 439. The active-site Nucleophile is the histidine 80. N-linked (GlcNAc...) asparagine glycans are attached at residues asparagine 103 and asparagine 118. Arginine 163 contacts 1D-myo-inositol hexakisphosphate. Asparagine 203 carries an N-linked (GlcNAc...) asparagine glycan. A 1D-myo-inositol hexakisphosphate-binding site is contributed by aspartate 207. Asparagine 226 carries N-linked (GlcNAc...) asparagine glycosylation. Residue lysine 297 participates in 1D-myo-inositol hexakisphosphate binding. Residues asparagine 331 and asparagine 335 are each glycosylated (N-linked (GlcNAc...) asparagine). Histidine 357 and aspartate 358 together coordinate 1D-myo-inositol hexakisphosphate. A glycan (N-linked (GlcNAc...) asparagine) is linked at asparagine 372.

It belongs to the histidine acid phosphatase family. In terms of assembly, monomer. Post-translationally, seems to be cleaved into at least two pieces, most likely due to proteases in the supernatant. The N-terminal fragment, called phyB seems to retain phytase activity.

The protein localises to the secreted. It catalyses the reaction 1D-myo-inositol hexakisphosphate + H2O = 1D-myo-inositol 1,2,4,5,6-pentakisphosphate + phosphate. The enzyme catalyses 1D-myo-inositol 1,2,4,5,6-pentakisphosphate + H2O = 1D-myo-inositol 1,2,5,6-tetrakisphosphate + phosphate. It carries out the reaction 1D-myo-inositol 1,2,5,6-tetrakisphosphate + H2O = 1D-myo-inositol 1,2,6-trisphosphate + phosphate. The catalysed reaction is 1D-myo-inositol 1,2,6-trisphosphate + H2O = 1D-myo-inositol 1,2-bisphosphate + phosphate. It catalyses the reaction 1D-myo-inositol 1,2-bisphosphate + H2O = 1D-myo-inositol 2-phosphate + phosphate. Catalyzes the phosphate monoester hydrolysis of phytic acid (myo-inositol hexakisphosphate), which results in the stepwise formation of myo-inositol pentakis-, tetrakis-, tris-, bis-, and monophosphates, as well as the liberation of inorganic phosphate. Myo-inositol 2-monophosphate is the end product. Has a broad substrate specificity and is also able to dephosphorylate other classic acid phosphatase substrates such as p-nitrophenyl phosphate, phenyl phosphate, fructose 1,6-bisphosphate, fructose 6-phosphate, glucose 6-phosphate, ribose 5-phosphate, alpha-glycerophosphate, beta-glycerophosphate, 3-phosphoglycerate, as well as ADP and ATP. In Emericella nidulans (strain FGSC A4 / ATCC 38163 / CBS 112.46 / NRRL 194 / M139) (Aspergillus nidulans), this protein is Phytase A.